Reading from the N-terminus, the 73-residue chain is Translation initiation factor IF-1 (73 aa).

The S1-like domain occupies 1–73; sequence MAKKDGVIEI…TRGRIVYRYK (73 aa).

This sequence belongs to the IF-1 family. Component of the 30S ribosomal translation pre-initiation complex which assembles on the 30S ribosome in the order IF-2 and IF-3, IF-1 and N-formylmethionyl-tRNA(fMet); mRNA recruitment can occur at any time during PIC assembly.

The protein localises to the cytoplasm. Its function is as follows. One of the essential components for the initiation of protein synthesis. Stabilizes the binding of IF-2 and IF-3 on the 30S subunit to which N-formylmethionyl-tRNA(fMet) subsequently binds. Helps modulate mRNA selection, yielding the 30S pre-initiation complex (PIC). Upon addition of the 50S ribosomal subunit IF-1, IF-2 and IF-3 are released leaving the mature 70S translation initiation complex. This chain is Translation initiation factor IF-1, found in Clavibacter michiganensis subsp. michiganensis (strain NCPPB 382).